We begin with the raw amino-acid sequence, 25 residues long: Caerin-2.4 (25 aa).

In terms of tissue distribution, expressed by the skin parotoid and/or rostral glands.

It is found in the secreted. Its function is as follows. Antibacterial peptide, that adopts an alpha helical conformation which can disrupt bacterial membranes. Each caerin displays a different antimicrobial specificity. The polypeptide is Caerin-2.4 (Ranoidea caerulea (Green tree frog)).